Here is a 177-residue protein sequence, read N- to C-terminus: Protein LIGHT-DEPENDENT SHORT HYPOCOTYLS 10 (177 aa).

Residues 1–10 are compositionally biased toward basic and acidic residues; that stretch reads MSSPRERGKS. Disordered regions lie at residues 1 to 31 and 144 to 177; these read MSSP…SQKR and RGIP…FSFS. In terms of domain architecture, ALOG spans 25–152; the sequence is RYESQKRRDW…ARGIPYKKKK (128 aa). Positions 150-154 match the Nuclear localization signal motif; sequence KKKKK. Residues 168–177 show a composition bias toward low complexity; it reads SSSSSSFSFS.

Belongs to the plant homeotic and developmental regulators ALOG protein family.

Its subcellular location is the nucleus. Probable transcription regulator that acts as a developmental regulator by promoting cell growth in response to light. This is Protein LIGHT-DEPENDENT SHORT HYPOCOTYLS 10 (LSH10) from Arabidopsis thaliana (Mouse-ear cress).